We begin with the raw amino-acid sequence, 320 residues long: MARPKIALIGAGQIGGTLAHLVALKELGDVVLFDIAEGTPEGKALDIAESGPSEGFDAKLKGTQSYADIAGADVCIVTAGVPRKPGMSRDDLLGINLKVMKSVGEGIRDNAPDAFVICITNPLDAMVWALQQFSGLPANKVCGMAGVLDSARFRHFLAEEFNVSMKDVTAFVLGGHGDTMVPSVRYSTVAGIPLPDLIKMGWTSQEKLDAIVQRTRDGGAEIVGLLKTGSAYYAPATSAIEMAEAYLKDQKRVLPCAAYCNGELGVKGMYVGVPTVIGAGGIERIIDVSLTKEEQDMFDNSVNAVKGLVEACKGIDGSLA.

Residues 10–15 and Asp34 each bind NAD(+); that span reads GAGQIG. Substrate-binding residues include Arg83 and Arg89. Residues Asn96 and 119–121 contribute to the NAD(+) site; that span reads ITN. 2 residues coordinate substrate: Asn121 and Arg152. The Proton acceptor role is filled by His176.

The protein belongs to the LDH/MDH superfamily. MDH type 3 family.

It catalyses the reaction (S)-malate + NAD(+) = oxaloacetate + NADH + H(+). Catalyzes the reversible oxidation of malate to oxaloacetate. The polypeptide is Malate dehydrogenase (Ruegeria pomeroyi (strain ATCC 700808 / DSM 15171 / DSS-3) (Silicibacter pomeroyi)).